We begin with the raw amino-acid sequence, 563 residues long: Testis-expressed basic protein 1 (563 aa).

The chain crosses the membrane as a helical span at residues 3-23; the sequence is VLEITLAVILTLLGLAILAIL. A disordered region spans residues 56–81; sequence GSRHAYSTQSDTSYDNRERSKRDYTP. Residues 69 to 79 show a composition bias toward basic and acidic residues; that stretch reads YDNRERSKRDY. A helical membrane pass occupies residues 99–119; sequence ELILLLMCFILALSRSSIGSI. The disordered stretch occupies residues 311 to 563; the sequence is SEMSIPQGQG…GRKYNKKVEE (253 aa). Residues 367–383 are compositionally biased toward basic and acidic residues; sequence QVEKSEMGVPRRQESQV. The segment covering 384-395 has biased composition (low complexity); the sequence is KKSQSGVSKGQE. Basic and acidic residues-rich tracts occupy residues 412-447 and 485-544; these read QVEK…KKSE and EAQE…EKSK.

Its subcellular location is the membrane. The chain is Testis-expressed basic protein 1 from Homo sapiens (Human).